We begin with the raw amino-acid sequence, 434 residues long: Asparagine--tRNA ligase (434 aa).

This sequence belongs to the class-II aminoacyl-tRNA synthetase family.

It localises to the cytoplasm. The enzyme catalyses tRNA(Asn) + L-asparagine + ATP = L-asparaginyl-tRNA(Asn) + AMP + diphosphate + H(+). The polypeptide is Asparagine--tRNA ligase (Pyrococcus horikoshii (strain ATCC 700860 / DSM 12428 / JCM 9974 / NBRC 100139 / OT-3)).